We begin with the raw amino-acid sequence, 1078 residues long: Disheveled-associated activator of morphogenesis 1 (1078 aa).

Position 34 is a phosphoserine (serine 34). In terms of domain architecture, GBD/FH3 spans 45–420 (LPMPPVEELD…QIVIQNDKGQ (376 aa)). A coiled-coil region spans residues 437–526 (RMLVNENEVK…ELSRRAVCAS (90 aa)). 2 disordered regions span residues 456–480 (RKEH…TQEK) and 524–585 (CASI…PLGA). Residues 528-599 (PGGPSPGAPG…PGAPMGLALK (72 aa)) form the FH1 domain. Composition is skewed to pro residues over residues 530 to 539 (GPSPGAPGGP) and 548 to 585 (LLPP…PLGA). One can recognise an FH2 domain in the interval 600–1009 (KKSIPQPTNA…EERRARMEAQ (410 aa)). The actin-binding stretch occupies residues 693 to 702 (AQNCNILLSR). The span at 987 to 1027 (KQENENMRKKKEEEERRARMEAQLKEQRERERKMRKAKENS) shows a compositional bias: basic and acidic residues. Disordered stretches follow at residues 987 to 1034 (KQEN…GEFD) and 1055 to 1078 (RNRK…KLNF). 2 positions are modified to phosphoserine: serine 1027 and serine 1030. The 32-residue stretch at 1027–1058 (SEESGEFDDLVSALRSGEVFDKDLSKLKRNRK) folds into the DAD domain. Residues 1067 to 1078 (SSRERPITKLNF) show a composition bias toward basic and acidic residues.

The protein belongs to the formin homology family. As to quaternary structure, homodimer. Interacts with CIP4, FNBP1 and FNBP1L. Interacts with the SH3 domains of Abl, BTK, endophilin, spectrin and SRC. Binds specifically to GTP-bound CDC42 and RHOA. Interacts with INTU; INTU mediates the indirect interaction between DAAM1 and NPHP4. Interacts (via coiled coil domain) with KANK1 (via coiled coil domain). Expressed in all tissues examined.

It is found in the cytoplasm. The protein resides in the cytoskeleton. Its subcellular location is the cilium basal body. In terms of biological role, binds to disheveled (Dvl) and Rho, and mediates Wnt-induced Dvl-Rho complex formation. May play a role as a scaffolding protein to recruit Rho-GDP and Rho-GEF, thereby enhancing Rho-GTP formation. Can direct nucleation and elongation of new actin filaments. Involved in building functional cilia. Involved in the organization of the subapical actin network in multiciliated epithelial cells. Together with DAAM2, required for myocardial maturation and sarcomere assembly. During cell division, may regulate RHOA activation that signals spindle orientation and chromosomal segregation. This is Disheveled-associated activator of morphogenesis 1 (DAAM1) from Homo sapiens (Human).